We begin with the raw amino-acid sequence, 103 residues long: Flagellar hook-basal body complex protein FliE (103 aa).

Belongs to the FliE family.

The protein localises to the bacterial flagellum basal body. In Helicobacter hepaticus (strain ATCC 51449 / 3B1), this protein is Flagellar hook-basal body complex protein FliE.